We begin with the raw amino-acid sequence, 335 residues long: Glucokinase (335 aa).

Alanine 11 to threonine 16 is an ATP binding site.

The protein belongs to the bacterial glucokinase family.

The protein localises to the cytoplasm. It catalyses the reaction D-glucose + ATP = D-glucose 6-phosphate + ADP + H(+). This Xanthomonas axonopodis pv. citri (strain 306) protein is Glucokinase.